A 320-amino-acid polypeptide reads, in one-letter code: Polyprenal reductase 1 (320 aa).

A run of 6 helical transmembrane segments spans residues 5-25, 64-84, 143-163, 200-220, 243-263, and 266-286; these read IVWL…LPLV, FFGH…AATW, MHIL…LSLC, PLMK…WGWI, IIPY…AEIV, and LGLL…FGFV.

It belongs to the steroid 5-alpha reductase family. Polyprenal reductase subfamily. As to expression, expressed in roots and flowers.

The protein resides in the cell membrane. The catalysed reaction is a di-trans,poly-cis-dolichal + NADP(+) = a di-trans,poly-cis-polyprenal + NADPH + H(+). The protein operates within protein modification; protein glycosylation. Its function is as follows. Plays a key role in early steps of protein N-linked glycosylation by being involved in the conversion of polyprenol into dolichol. Acts as a polyprenal reductase that mediates the reduction of polyprenal into dolichal in a NADP-dependent mechanism. Dolichols are required for the synthesis of dolichol-linked monosaccharides and the oligosaccharide precursor used for N-glycosylation. Involved in the regulation of plant growth and reproductive processes. The protein is Polyprenal reductase 1 of Arabidopsis thaliana (Mouse-ear cress).